The chain runs to 416 residues: Neamine transaminase NeoN (416 aa).

Residue lysine 231 is modified to N6-(pyridoxal phosphate)lysine.

The protein belongs to the class-III pyridoxal-phosphate-dependent aminotransferase family. The cofactor is pyridoxal 5'-phosphate.

The catalysed reaction is neomycin C + 2-oxoglutarate = 6'''-deamino-6'''-oxoneomycin C + L-glutamate. It catalyses the reaction neamine + 2-oxoglutarate = 6'-oxoparomamine + L-glutamate. The protein operates within antibiotic biosynthesis; neomycin biosynthesis. Functionally, 6'-oxoglucosaminyl:L-glutamate aminotransferase that catalyzes pyridoxal-5'-phosphate-mediated transamination for the conversion of paromamine to neamine in the biosynthetic pathway of neomycin. Also able to catalyze deamination at C-6''' of neomycin. The chain is Neamine transaminase NeoN (neoN) from Streptomyces fradiae (Streptomyces roseoflavus).